A 95-amino-acid chain; its full sequence is Succinate dehydrogenase membrane anchor subunit (95 aa).

Residues 1-19 are Mitochondrial matrix-facing; sequence MYKTLLAQVFFHSIAKKKL. A helical membrane pass occupies residues 20–40; that stretch reads YFFWLPRLFSLLLVPGFLFDI. Position 41 (glutamate 41) is a topological domain, mitochondrial intermembrane. A helical transmembrane segment spans residues 42–62; it reads ILFLFHPIILLHASLGLSVII. Position 53 (histidine 53) interacts with heme. Topologically, residues 63-74 are mitochondrial matrix; it reads EDYIHIETIKFQ. Tyrosine 65 is an a ubiquinone binding site. A helical membrane pass occupies residues 75 to 95; that stretch reads YLSLIKLLLVLLINLNILYLL.

In terms of assembly, part of an enzyme complex containing four subunits: a flavoprotein, an iron-sulfur protein, plus two membrane-anchoring proteins. Heme is required as a cofactor.

The protein localises to the mitochondrion inner membrane. It functions in the pathway carbohydrate metabolism; tricarboxylic acid cycle. Its function is as follows. Membrane-anchoring subunit of succinate dehydrogenase (SDH). This chain is Succinate dehydrogenase membrane anchor subunit (SDH4), found in Porphyra purpurea (Red seaweed).